The chain runs to 166 residues: Large ribosomal subunit protein uL10 (166 aa).

Belongs to the universal ribosomal protein uL10 family. As to quaternary structure, part of the ribosomal stalk of the 50S ribosomal subunit. The N-terminus interacts with L11 and the large rRNA to form the base of the stalk. The C-terminus forms an elongated spine to which L12 dimers bind in a sequential fashion forming a multimeric L10(L12)X complex.

Functionally, forms part of the ribosomal stalk, playing a central role in the interaction of the ribosome with GTP-bound translation factors. The sequence is that of Large ribosomal subunit protein uL10 from Pseudomonas syringae pv. tomato (strain ATCC BAA-871 / DC3000).